The following is a 247-amino-acid chain: Probable transcriptional regulatory protein BHWA1_01533 (247 aa).

A disordered region spans residues 1–22 (MSGHSKWASIKHKKAANDSKKG).

The protein belongs to the TACO1 family.

Its subcellular location is the cytoplasm. The polypeptide is Probable transcriptional regulatory protein BHWA1_01533 (Brachyspira hyodysenteriae (strain ATCC 49526 / WA1)).